We begin with the raw amino-acid sequence, 281 residues long: 4-deoxy-L-threo-5-hexosulose-uronate ketol-isomerase (281 aa).

H198, H200, E205, and H248 together coordinate Zn(2+).

The protein belongs to the KduI family. Requires Zn(2+) as cofactor.

The catalysed reaction is 5-dehydro-4-deoxy-D-glucuronate = 3-deoxy-D-glycero-2,5-hexodiulosonate. It participates in glycan metabolism; pectin degradation; 2-dehydro-3-deoxy-D-gluconate from pectin: step 4/5. Its function is as follows. Catalyzes the isomerization of 5-dehydro-4-deoxy-D-glucuronate to 3-deoxy-D-glycero-2,5-hexodiulosonate. This is 4-deoxy-L-threo-5-hexosulose-uronate ketol-isomerase from Lacticaseibacillus casei (strain BL23) (Lactobacillus casei).